Here is a 351-residue protein sequence, read N- to C-terminus: Foldase protein PrsA 1 (351 aa).

A signal peptide spans 1 to 22 (MKNSNKLIASVVTLASVMALAA). C23 carries the N-palmitoyl cysteine lipid modification. The S-diacylglycerol cysteine moiety is linked to residue C23. Residues 145–240 (TPTMAVEMIT…KKFYIVKVTK (96 aa)) form the PpiC domain. Low complexity-rich tracts occupy residues 303–317 (KTKAASESSTTSESS) and 326–351 (ESEQTQTSSAEEPTETEAQTQEPAAQ). The tract at residues 303–351 (KTKAASESSTTSESSKAAEENPSESEQTQTSSAEEPTETEAQTQEPAAQ) is disordered.

The protein belongs to the PrsA family.

It localises to the cell membrane. The enzyme catalyses [protein]-peptidylproline (omega=180) = [protein]-peptidylproline (omega=0). In terms of biological role, plays a major role in protein secretion by helping the post-translocational extracellular folding of several secreted proteins. This chain is Foldase protein PrsA 1 (prsA1), found in Streptococcus pyogenes serotype M1.